A 335-amino-acid polypeptide reads, in one-letter code: Beta-1,4-mannooligosaccharide phosphorylase (335 aa).

It belongs to the glycosyl hydrolase 130 family. Homohexamer in solution.

It carries out the reaction [(1-&gt;4)-beta-D-mannosyl](n) + phosphate = [(1-&gt;4)-beta-D-mannosyl](n-1) + alpha-D-mannose 1-phosphate. Catalyzes the phosphorolysis of beta-1,4-mannooligosaccharides to mannose 1-phosphate (Man1P) and shorter mannooligosaccharides. Can also catalyze the phosphorolysis of 4-O-beta-D-mannopyranosyl-D-glucopyranose (Man-Glc), but shows higher activity toward longer mannooligosaccharides. Involved in a mannan catabolic pathway which feeds into glycolysis. This chain is Beta-1,4-mannooligosaccharide phosphorylase, found in Ruminococcus albus (strain ATCC 27210 / DSM 20455 / JCM 14654 / NCDO 2250 / 7).